The following is a 228-amino-acid chain: HTH-type transcriptional regulator ArcR (228 aa).

22 to 141 (SYINIPVGVL…VKLFSLLSET (120 aa)) contacts a nucleoside 3',5'-cyclic phosphate. The HTH crp-type domain occupies 155–228 (KLAKERVTKI…SKNWLVSKDL (74 aa)). The segment at residues 188 to 207 (IQLLSDMAGISRETTSHIIN) is a DNA-binding region (H-T-H motif).

It is found in the cytoplasm. Its function is as follows. Positively regulates the expression of the arcABDCR operon under anaerobic conditions, thus playing an essential role in arginine catabolism. May also control the expression of genes encoding proteins which are involved in anaerobic metabolism. Can bind cyclic AMP. This Staphylococcus epidermidis (strain ATCC 12228 / FDA PCI 1200) protein is HTH-type transcriptional regulator ArcR (arcR).